The following is a 206-amino-acid chain: Small ribosomal subunit protein uS4 (206 aa).

Residues 96–156 (GRLDNVVYRM…EKAKKQSRVK (61 aa)) form the S4 RNA-binding domain.

The protein belongs to the universal ribosomal protein uS4 family. Part of the 30S ribosomal subunit. Contacts protein S5. The interaction surface between S4 and S5 is involved in control of translational fidelity.

Its function is as follows. One of the primary rRNA binding proteins, it binds directly to 16S rRNA where it nucleates assembly of the body of the 30S subunit. Functionally, with S5 and S12 plays an important role in translational accuracy. The polypeptide is Small ribosomal subunit protein uS4 (Cronobacter sakazakii (strain ATCC BAA-894) (Enterobacter sakazakii)).